We begin with the raw amino-acid sequence, 511 residues long: MVLPDSNIMKNGSIKRLRDSQIENSPYSRPIKKITPNSSHEDLSATISNEGSLNFTPRTSRQESLYNMKKIFQKTYSQTKLGLFSSKKQVNTLETAIPTTPKQQLPTPTTSPEKNNILWSTPNSLTSLRTISNDLDDCRNRNLITDFSELSIINSSSSSIYSTQQSHPIFEIPEIVDNIVKQLYLIENEQDLLNGHHKKDVNRENTSTVVSCLAVSKTWNKVSKGYLMRDLKFTKSTSLTNFLSQCSTKKTTPQSLILHKMSDINNNNSRGLEIIIDPKQLRHLEYYVCPNILPPVNWFQSLTKLEKLILPGNKLINDSYLIQICRYLPNLKVLDLRACDNITDAGIVAVGTHCKQLVSCNIGRHRNGSSITGLSVVALAKNTMIRTLGLAGCDITDASMWELAQKCGKNIERLSLNNCNKLTNFSLPMLFAFNYFPNLNVLEIQNIAKITDVRHMVRYKIWKRSQRIPILIKGCDRITKLIHEEERQIKAQSLKTARKDMTLWVNQLENE.

Disordered stretches follow at residues 27–58 and 99–119; these read YSRP…FTPR and TTPK…NILW. The span at 45–58 shows a compositional bias: polar residues; that stretch reads ATISNEGSLNFTPR. The segment covering 99 to 112 has biased composition (low complexity); sequence TTPKQQLPTPTTSP.

Belongs to the AMN1 family.

The protein localises to the cytoplasm. The protein resides in the nucleus. Negative regulator of the mitotic exit network (MEN), required for multiple cell cycle checkpoints. Required for daughter cell separation and chromosome stability. Involved in copper sensitivity. The sequence is that of Antagonist of mitotic exit network protein 1 (AMN1) from Candida glabrata (strain ATCC 2001 / BCRC 20586 / JCM 3761 / NBRC 0622 / NRRL Y-65 / CBS 138) (Yeast).